Here is a 608-residue protein sequence, read N- to C-terminus: Protein FAM151A (608 aa).

Residues 14 to 34 (WILAGSVTVTLVLAISLILGL) traverse the membrane as a helical segment. A compositionally biased stretch (polar residues) spans 586-596 (VSSNRPSSRIG). Residues 586 to 608 (VSSNRPSSRIGPSSVEGFPGESR) are disordered.

The protein belongs to the menorin family.

It localises to the membrane. The chain is Protein FAM151A (Fam151a) from Mus musculus (Mouse).